Consider the following 117-residue polypeptide: Gamma-aminobutyric acid receptor-associated protein-like 1 (117 aa).

The Phosphatidylethanolamine amidated glycine; alternate moiety is linked to residue glycine 116. Residue glycine 116 is the site of Phosphatidylserine amidated glycine; alternate attachment. Residue lysine 117 is a propeptide, removed in mature form.

This sequence belongs to the ATG8 family. In terms of assembly, interacts with ATG13, OPRK1, RB1CC1 and ULK1. Interacts with TP53INP1 and TP53INP2. Directly interacts with SQSTM1. Interacts with ATG3, ATG7 and MAP15. Interacts with TECPR2. Interacts with TBC1D5. Interacts with MAPK15. Interacts with TRIM5. Interacts with MEFV and TRIM21. Interacts with WDFY3. Interacts with the reticulophagy receptor TEX264. Interacts with UBA5. Interacts with KBTBD6 and KBTBD7; the interaction is direct. Interacts with reticulophagy regulators RETREG1, RETREG2 and RETREG3. Interacts with IRGM. Interacts with DNM2. Interacts with NCOA4 (via C-terminus). In terms of processing, the precursor molecule is cleaved by ATG4 (ATG4A, ATG4B, ATG4C or ATG4D) to expose the glycine at the C-terminus and form the cytosolic form, GABARAPL1-I. The processed form is then activated by APG7L/ATG7, transferred to ATG3 and conjugated to phosphatidylethanolamine (PE) phospholipid to form the membrane-bound form, GABARAPL1-II. During non-canonical autophagy, the processed form is conjugated to phosphatidylserine (PS) phospholipid. ATG4 proteins also mediate the delipidation of PE-conjugated forms required for GABARAPL1 recycling when autophagosomes fuse with lysosomes. In addition, ATG4B and ATG4D mediate delipidation of ATG8 proteins conjugated to PS during non-canonical autophagy. ATG4B constitutes the major protein for proteolytic activation. ATG4D is the main enzyme for delipidation activity.

The protein localises to the cytoplasmic vesicle. The protein resides in the autophagosome. It localises to the cytoplasmic vesicle membrane. Its subcellular location is the cytoplasm. It is found in the cytoskeleton. The protein localises to the endoplasmic reticulum. The protein resides in the golgi apparatus. Its function is as follows. Ubiquitin-like modifier that increases cell-surface expression of kappa-type opioid receptor through facilitating anterograde intracellular trafficking of the receptor. Involved in formation of autophagosomal vacuoles. While LC3s are involved in elongation of the phagophore membrane, the GABARAP/GATE-16 subfamily is essential for a later stage in autophagosome maturation. Through its interaction with the reticulophagy receptor TEX264, participates in the remodeling of subdomains of the endoplasmic reticulum into autophagosomes upon nutrient stress, which then fuse with lysosomes for endoplasmic reticulum turnover. This Bos taurus (Bovine) protein is Gamma-aminobutyric acid receptor-associated protein-like 1.